Here is a 347-residue protein sequence, read N- to C-terminus: Terpene synthase 2 (347 aa).

4 residues coordinate Mg(2+): aspartate 103, asparagine 247, serine 251, and glutamate 255. Residues 103–107 carry the D(D/E)XX(D/E) motif motif; that stretch reads DDLLE. An NSE motif motif is present at residues 247 to 255; that stretch reads NDIFSLKKE. Positions 329-336 match the WxxxxxRY motif motif; sequence WCSKSTRY.

It belongs to the terpene synthase family. Requires Mg(2+) as cofactor.

In terms of biological role, terpene synthase that may be involved in the production of volatile terpenoids. Does not show detectable terpene products with either farnesyl diphosphate (FPP) or geranyl diphosphate (GPP). P.polycephalum has a unique biology and these volatile terpenoids could function in internal communication of P.polycephalum, to mark the territory that have been explored, or they may be involved in chemotaxis. The protein is Terpene synthase 2 of Physarum polycephalum (Slime mold).